Reading from the N-terminus, the 87-residue chain is Sec-independent protein translocase protein TatA (87 aa).

Residues Met1–Gly21 form a helical membrane-spanning segment. The interval Asn54 to Val87 is disordered.

The protein belongs to the TatA/E family. As to quaternary structure, the Tat system comprises two distinct complexes: a TatABC complex, containing multiple copies of TatA, TatB and TatC subunits, and a separate TatA complex, containing only TatA subunits. Substrates initially bind to the TatABC complex, which probably triggers association of the separate TatA complex to form the active translocon.

The protein resides in the cell inner membrane. Functionally, part of the twin-arginine translocation (Tat) system that transports large folded proteins containing a characteristic twin-arginine motif in their signal peptide across membranes. TatA could form the protein-conducting channel of the Tat system. The chain is Sec-independent protein translocase protein TatA from Photobacterium profundum (strain SS9).